A 96-amino-acid chain; its full sequence is Nucleoid-associated protein DR_0199 (96 aa).

The protein belongs to the YbaB/EbfC family. In terms of assembly, homodimer.

The protein resides in the cytoplasm. It is found in the nucleoid. Functionally, binds to DNA and alters its conformation. May be involved in regulation of gene expression, nucleoid organization and DNA protection. This is Nucleoid-associated protein DR_0199 from Deinococcus radiodurans (strain ATCC 13939 / DSM 20539 / JCM 16871 / CCUG 27074 / LMG 4051 / NBRC 15346 / NCIMB 9279 / VKM B-1422 / R1).